We begin with the raw amino-acid sequence, 158 residues long: Ribonuclease H (158 aa).

Residues 1–142 (MRKQVEIFTD…CDELARAAAM (142 aa)) enclose the RNase H type-1 domain. Residues Asp10, Glu48, Asp70, and Asp134 each contribute to the Mg(2+) site.

The protein belongs to the RNase H family. Monomer. Mg(2+) serves as cofactor.

Its subcellular location is the cytoplasm. It carries out the reaction Endonucleolytic cleavage to 5'-phosphomonoester.. In terms of biological role, endonuclease that specifically degrades the RNA of RNA-DNA hybrids. The protein is Ribonuclease H of Cronobacter sakazakii (strain ATCC BAA-894) (Enterobacter sakazakii).